Reading from the N-terminus, the 29-residue chain is Cytochrome b6-f complex subunit 8 (29 aa).

A helical transmembrane segment spans residues 3 to 23 (IVSLAWAALMIVFTFSLSLVV).

Belongs to the PetN family. The 4 large subunits of the cytochrome b6-f complex are cytochrome b6, subunit IV (17 kDa polypeptide, PetD), cytochrome f and the Rieske protein, while the 4 small subunits are PetG, PetL, PetM and PetN. The complex functions as a dimer.

The protein resides in the plastid membrane. In terms of biological role, component of the cytochrome b6-f complex, which mediates electron transfer between photosystem II (PSII) and photosystem I (PSI), cyclic electron flow around PSI, and state transitions. The polypeptide is Cytochrome b6-f complex subunit 8 (Cuscuta exaltata (Tall dodder)).